A 271-amino-acid polypeptide reads, in one-letter code: DNA-directed RNA polymerase subunit Rpo3 (271 aa).

This sequence belongs to the archaeal Rpo3/eukaryotic RPB3 RNA polymerase subunit family. As to quaternary structure, part of the RNA polymerase complex.

It localises to the cytoplasm. The catalysed reaction is RNA(n) + a ribonucleoside 5'-triphosphate = RNA(n+1) + diphosphate. DNA-dependent RNA polymerase (RNAP) catalyzes the transcription of DNA into RNA using the four ribonucleoside triphosphates as substrates. This Picrophilus torridus (strain ATCC 700027 / DSM 9790 / JCM 10055 / NBRC 100828 / KAW 2/3) protein is DNA-directed RNA polymerase subunit Rpo3.